A 115-amino-acid polypeptide reads, in one-letter code: Cell division topological specificity factor (115 aa).

The tract at residues 93–115 (QLKEPKNQSELDSPETEGTDQKS) is disordered. Residues 104-115 (DSPETEGTDQKS) show a composition bias toward acidic residues.

It belongs to the MinE family.

Its function is as follows. Prevents the cell division inhibition by proteins MinC and MinD at internal division sites while permitting inhibition at polar sites. This ensures cell division at the proper site by restricting the formation of a division septum at the midpoint of the long axis of the cell. This is Cell division topological specificity factor from Prochlorococcus marinus (strain NATL1A).